Reading from the N-terminus, the 196-residue chain is Molybdenum cofactor guanylyltransferase (196 aa).

GTP is bound by residues 14 to 16, lysine 27, aspartate 73, and aspartate 106; that span reads LAG. Aspartate 106 provides a ligand contact to Mg(2+).

It belongs to the MobA family. In terms of assembly, monomer. Requires Mg(2+) as cofactor.

The protein localises to the cytoplasm. It catalyses the reaction Mo-molybdopterin + GTP + H(+) = Mo-molybdopterin guanine dinucleotide + diphosphate. Transfers a GMP moiety from GTP to Mo-molybdopterin (Mo-MPT) cofactor (Moco or molybdenum cofactor) to form Mo-molybdopterin guanine dinucleotide (Mo-MGD) cofactor. This chain is Molybdenum cofactor guanylyltransferase, found in Acidiphilium cryptum (strain JF-5).